Consider the following 110-residue polypeptide: Cytochrome c6 (110 aa).

The N-terminal stretch at 1 to 25 (MKKLVSSVILALILFGFSWVSPAFA) is a signal peptide. Residues C39, C42, H43, and M83 each coordinate heme c.

This sequence belongs to the cytochrome c family. PetJ subfamily. In terms of assembly, monomer. In terms of processing, binds 1 heme c group covalently per subunit.

The protein localises to the cellular thylakoid lumen. Its function is as follows. Functions as an electron carrier between membrane-bound cytochrome b6-f and photosystem I in oxygenic photosynthesis. The chain is Cytochrome c6 from Gloeothece citriformis (strain PCC 7424) (Cyanothece sp. (strain PCC 7424)).